The sequence spans 175 residues: Alpha-crystallin B chain (175 aa).

N-acetylmethionine is present on M1. Residue S19 is modified to Phosphoserine. An O-linked (GlcNAc) serine glycan is attached at S41. Residues S45 and S59 each carry the phosphoserine modification. Residues 56–164 (RAPSWIDTGL…PERTIPITRE (109 aa)) form the sHSP domain. H83 provides a ligand contact to Zn(2+). The residue at position 92 (K92) is an N6-acetyllysine. Zn(2+) is bound by residues H104, E106, H111, and H119. A disordered region spans residues 142-175 (VLTVNGPRKQASGPERTIPITREEKPAVTAAPKK). N6-acetyllysine is present on K166. T170 carries O-linked (GlcNAc) threonine glycosylation.

It belongs to the small heat shock protein (HSP20) family. In terms of assembly, heteromer composed of three CRYAA and one CRYAB subunits. Aggregates with homologous proteins, including the small heat shock protein HSPB1, to form large heteromeric complexes. Inter-subunit bridging via zinc ions enhances stability, which is crucial as there is no protein turn over in the lens. Interacts with HSPBAP1 and TTN/titin. Interacts with TMEM109; in the cellular response to DNA damage. Interacts with DES; binds rapidly during early stages of DES filament assembly and a reduced binding seen in the later stages. Interacts with ATP6V1A and with MTOR, forming a ternary complex. Lens as well as other tissues.

It is found in the cytoplasm. The protein localises to the nucleus. The protein resides in the secreted. Its subcellular location is the lysosome. In terms of biological role, may contribute to the transparency and refractive index of the lens. Has chaperone-like activity, preventing aggregation of various proteins under a wide range of stress conditions. In lens epithelial cells, stabilizes the ATP6V1A protein, preventing its degradation by the proteasome. The polypeptide is Alpha-crystallin B chain (CRYAB) (Spalax judaei (Judean Mountains blind mole rat)).